The chain runs to 238 residues: 3-dehydroquinate dehydratase (238 aa).

3-dehydroquinate-binding positions include 35–37 and R70; that span reads ELR. H133 acts as the Proton donor/acceptor in catalysis. The active-site Schiff-base intermediate with substrate is the K160. Positions 202 and 225 each coordinate 3-dehydroquinate.

It belongs to the type-I 3-dehydroquinase family. Homodimer.

The enzyme catalyses 3-dehydroquinate = 3-dehydroshikimate + H2O. Its pathway is metabolic intermediate biosynthesis; chorismate biosynthesis; chorismate from D-erythrose 4-phosphate and phosphoenolpyruvate: step 3/7. Involved in the third step of the chorismate pathway, which leads to the biosynthesis of aromatic amino acids. Catalyzes the cis-dehydration of 3-dehydroquinate (DHQ) and introduces the first double bond of the aromatic ring to yield 3-dehydroshikimate. The polypeptide is 3-dehydroquinate dehydratase (Staphylococcus aureus (strain bovine RF122 / ET3-1)).